The primary structure comprises 304 residues: Quinolinate synthase (304 aa).

2 residues coordinate iminosuccinate: H23 and S40. C85 is a binding site for [4Fe-4S] cluster. Iminosuccinate is bound by residues Y111 to N113 and S128. Position 171 (C171) interacts with [4Fe-4S] cluster. Iminosuccinate is bound by residues H197–E199 and T214. C259 contacts [4Fe-4S] cluster.

Belongs to the quinolinate synthase family. Type 2 subfamily. [4Fe-4S] cluster serves as cofactor.

It localises to the cytoplasm. It catalyses the reaction iminosuccinate + dihydroxyacetone phosphate = quinolinate + phosphate + 2 H2O + H(+). It functions in the pathway cofactor biosynthesis; NAD(+) biosynthesis; quinolinate from iminoaspartate: step 1/1. Functionally, catalyzes the condensation of iminoaspartate with dihydroxyacetone phosphate to form quinolinate. This Pelobacter propionicus (strain DSM 2379 / NBRC 103807 / OttBd1) protein is Quinolinate synthase.